A 143-amino-acid chain; its full sequence is Large ribosomal subunit protein eL28z (143 aa).

Belongs to the eukaryotic ribosomal protein eL28 family. As to quaternary structure, component of the large ribosomal subunit. As to expression, expressed in seedlings, roots, stems, leaves, inflorescences and siliques.

The protein resides in the cytoplasm. It is found in the nucleus. It localises to the nucleolus. The protein localises to the nucleoplasm. Functionally, component of the large ribosomal subunit. Essential in leaf polarity establishment, probably having a role for translation in leaf dorsoventral patterning to specify leaf adaxial identity. The sequence is that of Large ribosomal subunit protein eL28z from Arabidopsis thaliana (Mouse-ear cress).